The chain runs to 71 residues: MPIIKIRDNEPFDVALRRFKRSCEKAGILSEIRRREFYEKPTTERKRAKASAIKRLSKKLARENLKRIRMY.

Belongs to the bacterial ribosomal protein bS21 family.

The polypeptide is Small ribosomal subunit protein bS21 (Buchnera aphidicola subsp. Cinara cedri (strain Cc)).